Consider the following 425-residue polypeptide: 3-phosphoshikimate 1-carboxyvinyltransferase (425 aa).

Residues lysine 23, serine 24, and arginine 28 each coordinate 3-phosphoshikimate. Position 23 (lysine 23) interacts with phosphoenolpyruvate. 2 residues coordinate phosphoenolpyruvate: glycine 96 and arginine 124. Residues threonine 170, serine 171, glutamine 172, serine 198, aspartate 314, and lysine 341 each contribute to the 3-phosphoshikimate site. Residue glutamine 172 coordinates phosphoenolpyruvate. The Proton acceptor role is filled by aspartate 314. Phosphoenolpyruvate is bound by residues arginine 345, arginine 386, and lysine 411.

Belongs to the EPSP synthase family. In terms of assembly, monomer.

The protein localises to the cytoplasm. The enzyme catalyses 3-phosphoshikimate + phosphoenolpyruvate = 5-O-(1-carboxyvinyl)-3-phosphoshikimate + phosphate. Its pathway is metabolic intermediate biosynthesis; chorismate biosynthesis; chorismate from D-erythrose 4-phosphate and phosphoenolpyruvate: step 6/7. Its function is as follows. Catalyzes the transfer of the enolpyruvyl moiety of phosphoenolpyruvate (PEP) to the 5-hydroxyl of shikimate-3-phosphate (S3P) to produce enolpyruvyl shikimate-3-phosphate and inorganic phosphate. The polypeptide is 3-phosphoshikimate 1-carboxyvinyltransferase (Nostoc sp. (strain PCC 7120 / SAG 25.82 / UTEX 2576)).